The chain runs to 254 residues: Triosephosphate isomerase (254 aa).

10–12 (NWK) contributes to the substrate binding site. Residue His-99 is the Electrophile of the active site. The active-site Proton acceptor is Glu-169. Substrate contacts are provided by residues Gly-175, Ser-215, and 236 to 237 (GG).

Belongs to the triosephosphate isomerase family. In terms of assembly, homodimer.

It localises to the cytoplasm. It catalyses the reaction D-glyceraldehyde 3-phosphate = dihydroxyacetone phosphate. Its pathway is carbohydrate biosynthesis; gluconeogenesis. It participates in carbohydrate degradation; glycolysis; D-glyceraldehyde 3-phosphate from glycerone phosphate: step 1/1. Its function is as follows. Involved in the gluconeogenesis. Catalyzes stereospecifically the conversion of dihydroxyacetone phosphate (DHAP) to D-glyceraldehyde-3-phosphate (G3P). The chain is Triosephosphate isomerase from Chlamydia caviae (strain ATCC VR-813 / DSM 19441 / 03DC25 / GPIC) (Chlamydophila caviae).